We begin with the raw amino-acid sequence, 314 residues long: 4-hydroxy-3-methylbut-2-enyl diphosphate reductase (314 aa).

Residue C12 coordinates [4Fe-4S] cluster. (2E)-4-hydroxy-3-methylbut-2-enyl diphosphate is bound by residues H43 and H81. Dimethylallyl diphosphate is bound by residues H43 and H81. H43 and H81 together coordinate isopentenyl diphosphate. Position 103 (C103) interacts with [4Fe-4S] cluster. Position 131 (H131) interacts with (2E)-4-hydroxy-3-methylbut-2-enyl diphosphate. Position 131 (H131) interacts with dimethylallyl diphosphate. Isopentenyl diphosphate is bound at residue H131. The active-site Proton donor is the E133. Residue T170 participates in (2E)-4-hydroxy-3-methylbut-2-enyl diphosphate binding. C198 is a binding site for [4Fe-4S] cluster. S226, N228, and S271 together coordinate (2E)-4-hydroxy-3-methylbut-2-enyl diphosphate. Dimethylallyl diphosphate-binding residues include S226, N228, and S271. Isopentenyl diphosphate is bound by residues S226, N228, and S271.

The protein belongs to the IspH family. It depends on [4Fe-4S] cluster as a cofactor.

It carries out the reaction isopentenyl diphosphate + 2 oxidized [2Fe-2S]-[ferredoxin] + H2O = (2E)-4-hydroxy-3-methylbut-2-enyl diphosphate + 2 reduced [2Fe-2S]-[ferredoxin] + 2 H(+). The enzyme catalyses dimethylallyl diphosphate + 2 oxidized [2Fe-2S]-[ferredoxin] + H2O = (2E)-4-hydroxy-3-methylbut-2-enyl diphosphate + 2 reduced [2Fe-2S]-[ferredoxin] + 2 H(+). The protein operates within isoprenoid biosynthesis; dimethylallyl diphosphate biosynthesis; dimethylallyl diphosphate from (2E)-4-hydroxy-3-methylbutenyl diphosphate: step 1/1. It functions in the pathway isoprenoid biosynthesis; isopentenyl diphosphate biosynthesis via DXP pathway; isopentenyl diphosphate from 1-deoxy-D-xylulose 5-phosphate: step 6/6. Its function is as follows. Catalyzes the conversion of 1-hydroxy-2-methyl-2-(E)-butenyl 4-diphosphate (HMBPP) into a mixture of isopentenyl diphosphate (IPP) and dimethylallyl diphosphate (DMAPP). Acts in the terminal step of the DOXP/MEP pathway for isoprenoid precursor biosynthesis. This chain is 4-hydroxy-3-methylbut-2-enyl diphosphate reductase, found in Shouchella clausii (strain KSM-K16) (Alkalihalobacillus clausii).